The primary structure comprises 459 residues: tRNA modification GTPase MnmE (459 aa).

3 residues coordinate (6S)-5-formyl-5,6,7,8-tetrahydrofolate: arginine 22, glutamate 85, and arginine 124. One can recognise a TrmE-type G domain in the interval 221-380 (GLSTVIVGKP…LELQIRDLFF (160 aa)). Asparagine 231 contacts K(+). Residues 231 to 236 (NVGKSS), 250 to 256 (TEVAGTT), and 275 to 278 (DTAG) contribute to the GTP site. Serine 235 provides a ligand contact to Mg(2+). The K(+) site is built by threonine 250, valine 252, and threonine 255. Residue threonine 256 participates in Mg(2+) binding. (6S)-5-formyl-5,6,7,8-tetrahydrofolate is bound at residue lysine 459.

Belongs to the TRAFAC class TrmE-Era-EngA-EngB-Septin-like GTPase superfamily. TrmE GTPase family. In terms of assembly, homodimer. Heterotetramer of two MnmE and two MnmG subunits. K(+) is required as a cofactor.

Its subcellular location is the cytoplasm. Functionally, exhibits a very high intrinsic GTPase hydrolysis rate. Involved in the addition of a carboxymethylaminomethyl (cmnm) group at the wobble position (U34) of certain tRNAs, forming tRNA-cmnm(5)s(2)U34. The polypeptide is tRNA modification GTPase MnmE (Staphylococcus haemolyticus (strain JCSC1435)).